The primary structure comprises 418 residues: Glutamyl-tRNA reductase (418 aa).

Residues 51–54, Ser-107, 112–114, and Gln-118 each bind substrate; these read TCNR and EPQ. Residue Cys-52 is the Nucleophile of the active site. Residue 187–192 participates in NADP(+) binding; sequence GAGETA.

It belongs to the glutamyl-tRNA reductase family. In terms of assembly, homodimer.

It carries out the reaction (S)-4-amino-5-oxopentanoate + tRNA(Glu) + NADP(+) = L-glutamyl-tRNA(Glu) + NADPH + H(+). It functions in the pathway porphyrin-containing compound metabolism; protoporphyrin-IX biosynthesis; 5-aminolevulinate from L-glutamyl-tRNA(Glu): step 1/2. Its function is as follows. Catalyzes the NADPH-dependent reduction of glutamyl-tRNA(Glu) to glutamate 1-semialdehyde (GSA). The sequence is that of Glutamyl-tRNA reductase from Dichelobacter nodosus (strain VCS1703A).